We begin with the raw amino-acid sequence, 319 residues long: Thiamine pyrophosphokinase (319 aa).

S2 carries the post-translational modification N-acetylserine.

The protein belongs to the thiamine pyrophosphokinase family. Homodimer.

The catalysed reaction is thiamine + ATP = thiamine diphosphate + AMP + H(+). Its pathway is cofactor biosynthesis; thiamine diphosphate biosynthesis; thiamine diphosphate from thiamine: step 1/1. Its function is as follows. Essential protein, it is the only enzyme in yeast capable of synthesizing thiamine pyrophosphate (TPP). The polypeptide is Thiamine pyrophosphokinase (Saccharomyces cerevisiae (strain ATCC 204508 / S288c) (Baker's yeast)).